Consider the following 306-residue polypeptide: HTH-type transcriptional regulator AlkR (306 aa).

An HTH araC/xylS-type domain is found at 207–305 (SNALAAIHAY…EQSPKHYRQQ (99 aa)). DNA-binding regions (H-T-H motif) lie at residues 224 to 245 (ESLADQCCMSRSKFATLFQSIV) and 272 to 295 (IQQIANKVGYSSETAFSQAFKRQF).

It functions in the pathway hydrocarbon metabolism; alkane degradation. Its function is as follows. This protein activates the expression of the alkane 1-monooxygenase AlkM. This is HTH-type transcriptional regulator AlkR (alkR) from Acinetobacter baylyi (strain ATCC 33305 / BD413 / ADP1).